The following is a 111-amino-acid chain: Small ribosomal subunit protein uS15c (111 aa).

This sequence belongs to the universal ribosomal protein uS15 family. In terms of assembly, part of the 30S ribosomal subunit.

The protein resides in the plastid. The protein localises to the chloroplast. In Staurastrum punctulatum (Green alga), this protein is Small ribosomal subunit protein uS15c (rps15).